Reading from the N-terminus, the 133-residue chain is Ribosome-binding factor A (133 aa).

The protein belongs to the RbfA family. Monomer. Binds 30S ribosomal subunits, but not 50S ribosomal subunits or 70S ribosomes.

The protein localises to the cytoplasm. Functionally, one of several proteins that assist in the late maturation steps of the functional core of the 30S ribosomal subunit. Associates with free 30S ribosomal subunits (but not with 30S subunits that are part of 70S ribosomes or polysomes). Required for efficient processing of 16S rRNA. May interact with the 5'-terminal helix region of 16S rRNA. In Chlamydia muridarum (strain MoPn / Nigg), this protein is Ribosome-binding factor A.